A 357-amino-acid chain; its full sequence is UPF0283 membrane protein BMEI0952 (357 aa).

The interval 1–36 is disordered; sequence MSDKTPRKPTAFRLEQPARVSAASEQEEPRRPRAVK. The segment covering 27-36 has biased composition (basic and acidic residues); that stretch reads EEPRRPRAVK. Transmembrane regions (helical) follow at residues 78–98 and 109–129; these read ILFGALGILVSFAIGIWTEDL and LGWTALGVAMVALAAFAAIIL.

It belongs to the UPF0283 family.

It is found in the cell inner membrane. The protein is UPF0283 membrane protein BMEI0952 of Brucella melitensis biotype 1 (strain ATCC 23456 / CCUG 17765 / NCTC 10094 / 16M).